Reading from the N-terminus, the 234-residue chain is Interleukin-34 (234 aa).

An N-terminal signal peptide occupies residues Met-1–Gly-20. Asn-99 carries N-linked (GlcNAc...) asparagine glycosylation. Positions Pro-215–Pro-234 are disordered. Positions Leu-222–Pro-234 are enriched in polar residues.

This sequence belongs to the IL-34 family. Homodimer. Interacts with CSF1R.

The protein resides in the secreted. Cytokine that promotes the proliferation, survival and differentiation of monocytes and macrophages. Promotes the release of pro-inflammatory chemokines, and thereby plays an important role in innate immunity and in inflammatory processes. Plays an important role in the regulation of osteoclast proliferation and differentiation, and in the regulation of bone resorption. Signaling via CSF1R and its downstream effectors stimulates phosphorylation of MAPK1/ERK2 AND MAPK3/ERK1. The polypeptide is Interleukin-34 (Il34) (Rattus norvegicus (Rat)).